The sequence spans 209 residues: Large ribosomal subunit protein bL25 (209 aa).

2 disordered regions span residues 1-20 and 190-209; these read MSKS…KGSS and LDVS…TQTS. A compositionally biased stretch (basic and acidic residues) spans 8–20; it reads KAEKRERVGKGSS. Residues 192 to 209 show a composition bias toward acidic residues; sequence VSDETSEQEKDEGETQTS.

It belongs to the bacterial ribosomal protein bL25 family. CTC subfamily. In terms of assembly, part of the 50S ribosomal subunit; part of the 5S rRNA/L5/L18/L25 subcomplex. Contacts the 5S rRNA. Binds to the 5S rRNA independently of L5 and L18.

Functionally, this is one of the proteins that binds to the 5S RNA in the ribosome where it forms part of the central protuberance. The sequence is that of Large ribosomal subunit protein bL25 from Bartonella tribocorum (strain CIP 105476 / IBS 506).